Reading from the N-terminus, the 479-residue chain is Probable phosphatidate cytidylyltransferase (479 aa).

Basic and acidic residues predominate over residues 1-28 (MRTDNIRNRKEQLKKQEKKDFDSSKDEE). The segment at 1–71 (MRTDNIRNRK…NNNNNNNNIK (71 aa)) is disordered. Topologically, residues 1–108 (MRTDNIRNRK…LAIRSVMGAF (108 aa)) are cytoplasmic. Residues 53-69 (NKNIINQKTNNNNNNNN) show a composition bias toward low complexity. The helical transmembrane segment at 109 to 129 (MIGFFTIVLSTDHFIVALFVI) threads the bilayer. The Extracellular portion of the chain corresponds to 130–159 (ALQLLVFKEMIALRYIEAKEKKIPHFRTLN). A helical transmembrane segment spans residues 160–180 (WFFLFTSFFFFYAKPILITLA). Topologically, residues 181 to 192 (NYYPDIFQHFVR) are cytoplasmic. Residues 193 to 213 (YHLWHSFSLYCIGFVLFILTL) form a helical membrane-spanning segment. At 214-240 (RKGVYRYQFSQLTWTLMILMMVVVQSN) the chain is on the extracellular side. The helical transmembrane segment at 241-261 (FLISNIYQGLIWFILPVSIIV) threads the bilayer. The Cytoplasmic segment spans residues 262-293 (CNDIFAYFNGFFLGKKFINRPLMKISPNKTWE). The chain crosses the membrane as a helical span at residues 294-314 (GFIGATGWTLLFAYYFCGFLL). Over 315–375 (KYDWIVCPKG…FTYIPIQFHA (61 aa)) the chain is Extracellular. Residues 376–396 (LVLALFGSLIAPFGGFFASGI) form a helical membrane-spanning segment. The Cytoplasmic portion of the chain corresponds to 397 to 479 (KRAYKVKDFD…IEFTTGTITA (83 aa)).

The protein belongs to the CDS family.

It is found in the membrane. The enzyme catalyses a 1,2-diacyl-sn-glycero-3-phosphate + CTP + H(+) = a CDP-1,2-diacyl-sn-glycerol + diphosphate. It functions in the pathway phospholipid metabolism; CDP-diacylglycerol biosynthesis; CDP-diacylglycerol from sn-glycerol 3-phosphate: step 3/3. The chain is Probable phosphatidate cytidylyltransferase (cdsA) from Dictyostelium discoideum (Social amoeba).